A 408-amino-acid polypeptide reads, in one-letter code: tRNA-specific 2-thiouridylase MnmA (408 aa).

ATP-binding positions include Gly38 to Ser45 and Met64. Residues Asn124–Asp126 form an interaction with target base in tRNA region. The active-site Nucleophile is Cys129. A disulfide bridge links Cys129 with Cys231. Residue Gly153 participates in ATP binding. An interaction with tRNA region spans residues Lys181–Gln183. Cys231 functions as the Cysteine persulfide intermediate in the catalytic mechanism. The segment at Arg348–Tyr349 is interaction with tRNA.

The protein belongs to the MnmA/TRMU family.

It is found in the cytoplasm. The enzyme catalyses S-sulfanyl-L-cysteinyl-[protein] + uridine(34) in tRNA + AH2 + ATP = 2-thiouridine(34) in tRNA + L-cysteinyl-[protein] + A + AMP + diphosphate + H(+). Functionally, catalyzes the 2-thiolation of uridine at the wobble position (U34) of tRNA, leading to the formation of s(2)U34. The protein is tRNA-specific 2-thiouridylase MnmA of Psychrobacter arcticus (strain DSM 17307 / VKM B-2377 / 273-4).